Here is a 79-residue protein sequence, read N- to C-terminus: Acyl carrier protein (79 aa).

The 76-residue stretch at 2 to 77 (DNIEQRVKKI…QAIDYATAHV (76 aa)) folds into the Carrier domain. Residue Ser37 is modified to O-(pantetheine 4'-phosphoryl)serine.

The protein belongs to the acyl carrier protein (ACP) family. Post-translationally, 4'-phosphopantetheine is transferred from CoA to a specific serine of apo-ACP by AcpS. This modification is essential for activity because fatty acids are bound in thioester linkage to the sulfhydryl of the prosthetic group.

It localises to the cytoplasm. It participates in lipid metabolism; fatty acid biosynthesis. Functionally, carrier of the growing fatty acid chain in fatty acid biosynthesis. The protein is Acyl carrier protein of Cupriavidus pinatubonensis (strain JMP 134 / LMG 1197) (Cupriavidus necator (strain JMP 134)).